The chain runs to 246 residues: Biosynthetic peptidoglycan transglycosylase (246 aa).

A helical transmembrane segment spans residues 28–48 (FALFLVLFLSSVVLFRFVPVP).

This sequence belongs to the glycosyltransferase 51 family.

It is found in the cell inner membrane. The catalysed reaction is [GlcNAc-(1-&gt;4)-Mur2Ac(oyl-L-Ala-gamma-D-Glu-L-Lys-D-Ala-D-Ala)](n)-di-trans,octa-cis-undecaprenyl diphosphate + beta-D-GlcNAc-(1-&gt;4)-Mur2Ac(oyl-L-Ala-gamma-D-Glu-L-Lys-D-Ala-D-Ala)-di-trans,octa-cis-undecaprenyl diphosphate = [GlcNAc-(1-&gt;4)-Mur2Ac(oyl-L-Ala-gamma-D-Glu-L-Lys-D-Ala-D-Ala)](n+1)-di-trans,octa-cis-undecaprenyl diphosphate + di-trans,octa-cis-undecaprenyl diphosphate + H(+). It functions in the pathway cell wall biogenesis; peptidoglycan biosynthesis. Functionally, peptidoglycan polymerase that catalyzes glycan chain elongation from lipid-linked precursors. The protein is Biosynthetic peptidoglycan transglycosylase of Pasteurella multocida (strain Pm70).